We begin with the raw amino-acid sequence, 301 residues long: Homoserine O-acetyltransferase (301 aa).

Cys-142 (acyl-thioester intermediate) is an active-site residue. Substrate is bound by residues Lys-163 and Ser-192. The Proton acceptor role is filled by His-235. Glu-237 is a catalytic residue. Arg-249 provides a ligand contact to substrate.

This sequence belongs to the MetA family.

It is found in the cytoplasm. The enzyme catalyses L-homoserine + acetyl-CoA = O-acetyl-L-homoserine + CoA. It functions in the pathway amino-acid biosynthesis; L-methionine biosynthesis via de novo pathway; O-acetyl-L-homoserine from L-homoserine: step 1/1. Functionally, transfers an acetyl group from acetyl-CoA to L-homoserine, forming acetyl-L-homoserine. The sequence is that of Homoserine O-acetyltransferase from Bacillus mycoides (strain KBAB4) (Bacillus weihenstephanensis).